A 210-amino-acid polypeptide reads, in one-letter code: Acetoin utilization protein AcuA (210 aa).

The region spanning 20–161 (LIEGPVSPED…YRKIMEKMMN (142 aa)) is the N-acetyltransferase domain.

It belongs to the acetyltransferase family. In terms of assembly, monomer.

The protein operates within ketone degradation; acetoin degradation. With respect to regulation, activity is sensitive to salt concentration, a high concentration of KCL (500 mM) is needed for complete inactivation. In terms of biological role, part of the acuABC operon, which is possibly involved in the breakdown of acetoin and butanediol. Acts as an acetyltransferase inactivating acetyl-CoA synthetase AcsA via acetylation at a Lys residue. This Bacillus subtilis (strain 168) protein is Acetoin utilization protein AcuA (acuA).